Consider the following 518-residue polypeptide: Phosphoacetylglucosamine mutase 1 (518 aa).

Position 49 is a phosphothreonine (Thr-49). Ser-51 functions as the Phosphoserine intermediate in the catalytic mechanism. The Mg(2+) site is built by Ser-51, Asp-267, Asp-269, and Asp-271. Ser-51 is modified (phosphoserine). Residues 360 to 362 (EAN), 486 to 490 (RASGT), and Arg-495 contribute to the substrate site.

It belongs to the phosphohexose mutase family. Requires Mg(2+) as cofactor.

Its subcellular location is the cytoplasm. The protein resides in the nucleus. It carries out the reaction N-acetyl-alpha-D-glucosamine 1-phosphate = N-acetyl-D-glucosamine 6-phosphate. It participates in nucleotide-sugar biosynthesis; UDP-N-acetyl-alpha-D-glucosamine biosynthesis; N-acetyl-alpha-D-glucosamine 1-phosphate from alpha-D-glucosamine 6-phosphate (route I): step 2/2. Catalyzes the conversion of GlcNAc-6-P into GlcNAc-1-P during the synthesis of uridine diphosphate/UDP-GlcNAc, which is a biosynthetic precursor of chitin and also supplies the amino sugars for N-linked oligosaccharides of glycoproteins. The protein is Phosphoacetylglucosamine mutase 1 of Schizosaccharomyces pombe (strain 972 / ATCC 24843) (Fission yeast).